The following is a 198-amino-acid chain: MPIGVPRVRFLYDEDTGQVWIDIYNRLYRERCLFLTHTINTKIGNQLAGLFIYLGIQDDPKDIFFFLNSPGGGIISGLAIYDSMQVVRPDTQTICVGLAASMACFLLVGGTITKRLAFPHARVMMHQPLSTFFETQTGDAVMEVDELLKMRENLIEVYAQRTGKPHWVISEDIERDVFLSPTEAKTYGLVDVVGVTLI.

Ser-101 (nucleophile) is an active-site residue. His-126 is a catalytic residue.

Belongs to the peptidase S14 family. In terms of assembly, component of the plastid Clp protease core complex.

It localises to the plastid. It carries out the reaction Hydrolysis of proteins to small peptides in the presence of ATP and magnesium. alpha-casein is the usual test substrate. In the absence of ATP, only oligopeptides shorter than five residues are hydrolyzed (such as succinyl-Leu-Tyr-|-NHMec, and Leu-Tyr-Leu-|-Tyr-Trp, in which cleavage of the -Tyr-|-Leu- and -Tyr-|-Trp bonds also occurs).. Functionally, cleaves peptides in various proteins in a process that requires ATP hydrolysis. Has a chymotrypsin-like activity. Plays a major role in the degradation of misfolded proteins. This is ATP-dependent Clp protease proteolytic subunit (clpP) from Cuscuta gronovii (Common dodder).